A 282-amino-acid chain; its full sequence is 4-hydroxy-3-methylbut-2-enyl diphosphate reductase (282 aa).

[4Fe-4S] cluster is bound at residue cysteine 12. (2E)-4-hydroxy-3-methylbut-2-enyl diphosphate contacts are provided by histidine 40 and histidine 72. Positions 40 and 72 each coordinate dimethylallyl diphosphate. Histidine 40 and histidine 72 together coordinate isopentenyl diphosphate. Cysteine 94 provides a ligand contact to [4Fe-4S] cluster. (2E)-4-hydroxy-3-methylbut-2-enyl diphosphate is bound at residue histidine 122. A dimethylallyl diphosphate-binding site is contributed by histidine 122. Isopentenyl diphosphate is bound at residue histidine 122. The active-site Proton donor is the glutamate 124. Residue threonine 160 participates in (2E)-4-hydroxy-3-methylbut-2-enyl diphosphate binding. Cysteine 188 is a binding site for [4Fe-4S] cluster. Residues serine 216, asparagine 218, and serine 260 each contribute to the (2E)-4-hydroxy-3-methylbut-2-enyl diphosphate site. Dimethylallyl diphosphate contacts are provided by serine 216, asparagine 218, and serine 260. 3 residues coordinate isopentenyl diphosphate: serine 216, asparagine 218, and serine 260.

This sequence belongs to the IspH family. Requires [4Fe-4S] cluster as cofactor.

It carries out the reaction isopentenyl diphosphate + 2 oxidized [2Fe-2S]-[ferredoxin] + H2O = (2E)-4-hydroxy-3-methylbut-2-enyl diphosphate + 2 reduced [2Fe-2S]-[ferredoxin] + 2 H(+). It catalyses the reaction dimethylallyl diphosphate + 2 oxidized [2Fe-2S]-[ferredoxin] + H2O = (2E)-4-hydroxy-3-methylbut-2-enyl diphosphate + 2 reduced [2Fe-2S]-[ferredoxin] + 2 H(+). It participates in isoprenoid biosynthesis; dimethylallyl diphosphate biosynthesis; dimethylallyl diphosphate from (2E)-4-hydroxy-3-methylbutenyl diphosphate: step 1/1. The protein operates within isoprenoid biosynthesis; isopentenyl diphosphate biosynthesis via DXP pathway; isopentenyl diphosphate from 1-deoxy-D-xylulose 5-phosphate: step 6/6. Catalyzes the conversion of 1-hydroxy-2-methyl-2-(E)-butenyl 4-diphosphate (HMBPP) into a mixture of isopentenyl diphosphate (IPP) and dimethylallyl diphosphate (DMAPP). Acts in the terminal step of the DOXP/MEP pathway for isoprenoid precursor biosynthesis. In Geotalea daltonii (strain DSM 22248 / JCM 15807 / FRC-32) (Geobacter daltonii), this protein is 4-hydroxy-3-methylbut-2-enyl diphosphate reductase.